The following is a 615-amino-acid chain: Lipoprotein LpqB (615 aa).

The N-terminal stretch at 1 to 29 is a signal peptide; it reads MGADRGRGGRRRPARVVAYAVGGVVLLAG. Cys-30 carries the N-palmitoyl cysteine lipid modification. The S-diacylglycerol cysteine moiety is linked to residue Cys-30. The disordered stretch occupies residues 100–123; that stretch reads PDESATVLAGGPGTESDHSGNRED. The span at 114–123 shows a compositional bias: basic and acidic residues; sequence ESDHSGNRED.

It belongs to the LpqB lipoprotein family.

It localises to the cell membrane. In Streptomyces coelicolor (strain ATCC BAA-471 / A3(2) / M145), this protein is Lipoprotein LpqB.